We begin with the raw amino-acid sequence, 386 residues long: Pepsin A (386 aa).

Residues 1 to 15 (MKWLLLISLVALSEC) form the signal peptide. The propeptide at 16-60 (AIVKVPLVRKKSLRQNLIEHGLLNDFLKNQSPNPASKYFPQEPTV) is activation peptide. The Peptidase A1 domain maps to 74 to 383 (YFGTIGIGTP…DRANNQVGLA (310 aa)). D92 is a catalytic residue. Intrachain disulfides connect C105/C110 and C266/C270. D275 is an active-site residue. C309 and C342 are disulfide-bonded.

This sequence belongs to the peptidase A1 family.

It localises to the secreted. The catalysed reaction is Preferential cleavage: hydrophobic, preferably aromatic, residues in P1 and P1' positions. Cleaves 1-Phe-|-Val-2, 4-Gln-|-His-5, 13-Glu-|-Ala-14, 14-Ala-|-Leu-15, 15-Leu-|-Tyr-16, 16-Tyr-|-Leu-17, 23-Gly-|-Phe-24, 24-Phe-|-Phe-25 and 25-Phe-|-Tyr-26 bonds in the B chain of insulin.. Shows particularly broad specificity; although bonds involving phenylalanine and leucine are preferred, many others are also cleaved to some extent. In Canis lupus familiaris (Dog), this protein is Pepsin A (PGA).